Consider the following 37-residue polypeptide: Small ribosomal subunit protein eS32 (37 aa).

This sequence belongs to the eukaryotic ribosomal protein eS32 family. As to quaternary structure, part of the small ribosomal subunit.

In terms of biological role, interacts with N(4)-acetylcytidine (ac(4)C) 1459 of the small rRNA; the acetyl group of ac(4)C1459 briges the interaction with this protein. The protein is Small ribosomal subunit protein eS32 (rpl41e) of Thermococcus kodakarensis (strain ATCC BAA-918 / JCM 12380 / KOD1) (Pyrococcus kodakaraensis (strain KOD1)).